Consider the following 399-residue polypeptide: uncharacterized protein (399 aa).

The next 11 membrane-spanning stretches (helical) occupy residues 19–39 (IFSI…PLFV), 46–66 (VNLL…LLMY), 91–111 (FYTI…PILG), 123–143 (QFEQ…IIAS), 146–166 (IYAK…IFIA), 183–203 (LLSA…ISYI), 225–247 (VAIL…MPIW), 283–303 (VLLL…LLGF), 307–327 (FGLD…FAYL), 335–355 (LFSI…YLGY), and 369–389 (IEYT…VYLL).

The protein resides in the host membrane. Functionally, putative amino acid transporter. This is an uncharacterized protein from Saccharolobus islandicus (Sulfolobus islandicus).